Consider the following 628-residue polypeptide: Glutamyl-tRNA(Gln) amidotransferase subunit E (628 aa).

This sequence belongs to the GatB/GatE family. GatE subfamily. In terms of assembly, heterodimer of GatD and GatE.

It carries out the reaction L-glutamyl-tRNA(Gln) + L-glutamine + ATP + H2O = L-glutaminyl-tRNA(Gln) + L-glutamate + ADP + phosphate + H(+). Functionally, allows the formation of correctly charged Gln-tRNA(Gln) through the transamidation of misacylated Glu-tRNA(Gln) in organisms which lack glutaminyl-tRNA synthetase. The reaction takes place in the presence of glutamine and ATP through an activated gamma-phospho-Glu-tRNA(Gln). The GatDE system is specific for glutamate and does not act on aspartate. This Thermococcus gammatolerans (strain DSM 15229 / JCM 11827 / EJ3) protein is Glutamyl-tRNA(Gln) amidotransferase subunit E.